The sequence spans 388 residues: Protein YnjB (388 aa).

A disordered region spans residues 333–357; it reads AVWGDPSVLDPQKLPDGQRESLQSR.

This is Protein YnjB (ynjB) from Escherichia coli (strain K12).